A 402-amino-acid chain; its full sequence is Phosphoglycerate kinase (402 aa).

Residues 24 to 26 (DFN), R40, 63 to 66 (HFGR), R122, and R155 contribute to the substrate site. ATP contacts are provided by residues K206, G297, E328, and 357–360 (GGDS).

Belongs to the phosphoglycerate kinase family. Monomer.

Its subcellular location is the cytoplasm. The enzyme catalyses (2R)-3-phosphoglycerate + ATP = (2R)-3-phospho-glyceroyl phosphate + ADP. It participates in carbohydrate degradation; glycolysis; pyruvate from D-glyceraldehyde 3-phosphate: step 2/5. The protein is Phosphoglycerate kinase of Synechococcus sp. (strain WH7803).